Consider the following 177-residue polypeptide: Large ribosomal subunit protein uL5 (177 aa).

It belongs to the universal ribosomal protein uL5 family. As to quaternary structure, part of the 50S ribosomal subunit; contacts the 5S rRNA and probably tRNA. Forms a bridge to the 30S subunit in the 70S ribosome.

Its function is as follows. This is one of the proteins that bind and probably mediate the attachment of the 5S RNA into the large ribosomal subunit, where it forms part of the central protuberance. In the 70S ribosome it contacts protein S13 of the 30S subunit (bridge B1b), connecting the 2 subunits; this bridge is implicated in subunit movement. May contact the P site tRNA; the 5S rRNA and some of its associated proteins might help stabilize positioning of ribosome-bound tRNAs. The polypeptide is Large ribosomal subunit protein uL5 (Sulfurisphaera tokodaii (strain DSM 16993 / JCM 10545 / NBRC 100140 / 7) (Sulfolobus tokodaii)).